The primary structure comprises 426 residues: Immunoglobulin mu Fc receptor (426 aa).

Positions 1–16 are cleaved as a signal peptide; the sequence is MNLWLWLLYFLPVSGT. Positions 24–121 constitute an Ig-like domain; the sequence is RLEVELGGSV…GKTQKVTLNV (98 aa). 2 disulfide bridges follow: cysteine 37–cysteine 103 and cysteine 49–cysteine 58. Position 91 is a phosphothreonine (threonine 91). The interval 178-212 is disordered; it reads KTEAPPVHQPSTNTSVSRHPRVYGASSETPTKPSA. The chain crosses the membrane as a helical span at residues 267–287; the sequence is FHILIPTFLGFLLLVLLGLVV. 2 disordered regions span residues 306–346 and 401–426; these read RRMR…REPD and DSND…PSRQ. Residues 415–426 show a composition bias toward pro residues; the sequence is PSKPPGPRPSRQ.

As to quaternary structure, interacts (via Ig-like domain) with IGHM (via CH4/Cmu4 domain), both secreted and membrane-bound IgM; the interaction is glycan-independent and multivalent theoretically involving up to eight binding sites for the IgM pentamer. Phosphorylated on both Tyr and Ser residues. In terms of processing, O-glycosylated. Sialylated. O-linked glycans regulate trafficking to the plasma membrane.

It localises to the cell membrane. It is found in the early endosome membrane. The protein localises to the golgi apparatus. Its subcellular location is the trans-Golgi network membrane. The protein resides in the lysosome membrane. Functionally, high-affinity Fc receptor for immunoglobulin M (IgM), both secreted and membrane-bound IgM. Primarily regulates IgM transport and homeostasis. In lymphoid cells, enables exocytosis of membrane-bound IgM on the plasma membrane as well as endocytosis of IgM-antigen complexes toward lysosomes for degradation. In mucosal epithelium, mediates retrotranscytosis of antigen-IgM complexes across mucosal M cells toward antigen-presenting cells in mucosal lymphoid tissues. Triggers costimulatory signaling and mediates most of IgM effector functions involved in B cell development and primary immune response to infection. Likely limits tonic IgM BCR signaling to self-antigens for proper negative selection of autoreactive B cells in the bone marrow and for the maintenance of regulatory B cell pool in peripheral lymphoid organs. Mediates antibody responses to T cell-dependent and T cell-independent antigens and promotes induction of an efficient neutralizing IgG response. Engages in cross-talk with antigen-receptor signaling via the non-canonical NF-kappa-B, MAP kinases and calcium signaling pathways. This Rattus norvegicus (Rat) protein is Immunoglobulin mu Fc receptor.